We begin with the raw amino-acid sequence, 312 residues long: Tetraacyldisaccharide 4'-kinase (312 aa).

60–67 (IAGGSGKT) provides a ligand contact to ATP.

It belongs to the LpxK family.

It catalyses the reaction a lipid A disaccharide + ATP = a lipid IVA + ADP + H(+). It participates in glycolipid biosynthesis; lipid IV(A) biosynthesis; lipid IV(A) from (3R)-3-hydroxytetradecanoyl-[acyl-carrier-protein] and UDP-N-acetyl-alpha-D-glucosamine: step 6/6. Transfers the gamma-phosphate of ATP to the 4'-position of a tetraacyldisaccharide 1-phosphate intermediate (termed DS-1-P) to form tetraacyldisaccharide 1,4'-bis-phosphate (lipid IVA). The protein is Tetraacyldisaccharide 4'-kinase of Helicobacter acinonychis (strain Sheeba).